Here is a 416-residue protein sequence, read N- to C-terminus: Serine hydroxymethyltransferase (416 aa).

Residues L121 and 125-127 each bind (6S)-5,6,7,8-tetrahydrofolate; that span reads GHL. K229 is subject to N6-(pyridoxal phosphate)lysine.

This sequence belongs to the SHMT family. As to quaternary structure, homodimer. The cofactor is pyridoxal 5'-phosphate.

It localises to the cytoplasm. It carries out the reaction (6R)-5,10-methylene-5,6,7,8-tetrahydrofolate + glycine + H2O = (6S)-5,6,7,8-tetrahydrofolate + L-serine. The protein operates within one-carbon metabolism; tetrahydrofolate interconversion. Its pathway is amino-acid biosynthesis; glycine biosynthesis; glycine from L-serine: step 1/1. Catalyzes the reversible interconversion of serine and glycine with tetrahydrofolate (THF) serving as the one-carbon carrier. This reaction serves as the major source of one-carbon groups required for the biosynthesis of purines, thymidylate, methionine, and other important biomolecules. Also exhibits THF-independent aldolase activity toward beta-hydroxyamino acids, producing glycine and aldehydes, via a retro-aldol mechanism. In Neisseria meningitidis serogroup A / serotype 4A (strain DSM 15465 / Z2491), this protein is Serine hydroxymethyltransferase.